A 100-amino-acid polypeptide reads, in one-letter code: MKITQEEVTHVANLSKLKFSPEETAEFATTLSKIVDMVELLEEVDTTGVAPTTTMADRKTVLRPDVAEKGTDRDRLFKNVPEKDNYYIKVPAILEDGGDA.

It belongs to the GatC family. Heterotrimer of A, B and C subunits.

It catalyses the reaction L-glutamyl-tRNA(Gln) + L-glutamine + ATP + H2O = L-glutaminyl-tRNA(Gln) + L-glutamate + ADP + phosphate + H(+). The catalysed reaction is L-aspartyl-tRNA(Asn) + L-glutamine + ATP + H2O = L-asparaginyl-tRNA(Asn) + L-glutamate + ADP + phosphate + 2 H(+). Allows the formation of correctly charged Asn-tRNA(Asn) or Gln-tRNA(Gln) through the transamidation of misacylated Asp-tRNA(Asn) or Glu-tRNA(Gln) in organisms which lack either or both of asparaginyl-tRNA or glutaminyl-tRNA synthetases. The reaction takes place in the presence of glutamine and ATP through an activated phospho-Asp-tRNA(Asn) or phospho-Glu-tRNA(Gln). The chain is Aspartyl/glutamyl-tRNA(Asn/Gln) amidotransferase subunit C from Streptococcus thermophilus (strain ATCC BAA-491 / LMD-9).